Reading from the N-terminus, the 236-residue chain is Purine nucleoside phosphorylase DeoD-type (236 aa).

His4 contributes to the a purine D-ribonucleoside binding site. Phosphate is bound by residues Gly20, Arg24, Arg43, and 87 to 90 (RVGT). A purine D-ribonucleoside-binding positions include 179-181 (EME) and 203-204 (SD). Residue Asp204 is the Proton donor of the active site.

It belongs to the PNP/UDP phosphorylase family. As to quaternary structure, homohexamer; trimer of homodimers.

It catalyses the reaction a purine D-ribonucleoside + phosphate = a purine nucleobase + alpha-D-ribose 1-phosphate. The enzyme catalyses a purine 2'-deoxy-D-ribonucleoside + phosphate = a purine nucleobase + 2-deoxy-alpha-D-ribose 1-phosphate. Its function is as follows. Catalyzes the reversible phosphorolytic breakdown of the N-glycosidic bond in the beta-(deoxy)ribonucleoside molecules, with the formation of the corresponding free purine bases and pentose-1-phosphate. This chain is Purine nucleoside phosphorylase DeoD-type, found in Streptococcus pneumoniae (strain CGSP14).